A 297-amino-acid chain; its full sequence is Acetyl-coenzyme A carboxylase carboxyl transferase subunit beta (297 aa).

Positions 1–23 (MSWIERILGRTSSSSSSSKSKVP) are disordered. A CoA carboxyltransferase N-terminal domain is found at 26–295 (VWTKCTSCEQ…PFKTAELIVE (270 aa)). 4 residues coordinate Zn(2+): C30, C33, C49, and C52. The C4-type zinc finger occupies 30–52 (CTSCEQVLYSEELKRNMHVCPKC).

The protein belongs to the AccD/PCCB family. As to quaternary structure, acetyl-CoA carboxylase is a heterohexamer composed of biotin carboxyl carrier protein (AccB), biotin carboxylase (AccC) and two subunits each of ACCase subunit alpha (AccA) and ACCase subunit beta (AccD). The cofactor is Zn(2+).

The protein resides in the cytoplasm. It carries out the reaction N(6)-carboxybiotinyl-L-lysyl-[protein] + acetyl-CoA = N(6)-biotinyl-L-lysyl-[protein] + malonyl-CoA. The protein operates within lipid metabolism; malonyl-CoA biosynthesis; malonyl-CoA from acetyl-CoA: step 1/1. Functionally, component of the acetyl coenzyme A carboxylase (ACC) complex. Biotin carboxylase (BC) catalyzes the carboxylation of biotin on its carrier protein (BCCP) and then the CO(2) group is transferred by the transcarboxylase to acetyl-CoA to form malonyl-CoA. The polypeptide is Acetyl-coenzyme A carboxylase carboxyl transferase subunit beta (Actinobacillus pleuropneumoniae serotype 3 (strain JL03)).